We begin with the raw amino-acid sequence, 232 residues long: MGCLSVVGASPCVSSSALSSPTSRLSCAPSCKLILNPIKKNHHLAAFQPAVHLFASNQSRSHASKRNHTTRIFLPHLVASMEEVEETYIMIKPDGVQRGLVGEIISRFEKKGFKLTGLKLFHCPKELAEEHYKDLQSKPFFPKLIDYITSGPVVCMAWEGVGVVASARKLIGATNPLNAEPGTIRGDLAVQTGRNVVHGSDSPDNGKREIALWFGEGELCSWTPVQEPWLIE.

A chloroplast-targeting transit peptide spans 1–79 (MGCLSVVGAS…TRIFLPHLVA (79 aa)). 6 residues coordinate ATP: lysine 92, phenylalanine 140, arginine 168, threonine 174, arginine 185, and asparagine 195. Histidine 198 (pros-phosphohistidine intermediate) is an active-site residue.

It belongs to the NDK family. Requires Mg(2+) as cofactor.

It is found in the plastid. The protein resides in the chloroplast. The enzyme catalyses a 2'-deoxyribonucleoside 5'-diphosphate + ATP = a 2'-deoxyribonucleoside 5'-triphosphate + ADP. The catalysed reaction is a ribonucleoside 5'-diphosphate + ATP = a ribonucleoside 5'-triphosphate + ADP. In terms of biological role, major role in the synthesis of nucleoside triphosphates other than ATP. The ATP gamma phosphate is transferred to the NDP beta phosphate via a ping-pong mechanism, using a phosphorylated active-site intermediate. The sequence is that of Nucleoside diphosphate kinase 2, chloroplastic from Nicotiana tabacum (Common tobacco).